We begin with the raw amino-acid sequence, 178 residues long: Cytochrome b6-f complex subunit 4 (178 aa).

3 consecutive transmembrane segments (helical) span residues 36-56, 95-115, and 131-151; these read LSYI…GLAV, LLGV…PFLE, and TVSL…ALPI.

It belongs to the cytochrome b family. PetD subfamily. In terms of assembly, the 4 large subunits of the cytochrome b6-f complex are cytochrome b6, subunit IV (17 kDa polypeptide, petD), cytochrome f and the Rieske protein, while the 4 small subunits are petG, petL, petM and petN. The complex functions as a dimer.

The protein localises to the plastid. It is found in the chloroplast thylakoid membrane. In terms of biological role, component of the cytochrome b6-f complex, which mediates electron transfer between photosystem II (PSII) and photosystem I (PSI), cyclic electron flow around PSI, and state transitions. The protein is Cytochrome b6-f complex subunit 4 of Picea abies (Norway spruce).